The sequence spans 272 residues: Shikimate dehydrogenase (NADP(+)) (272 aa).

Shikimate-binding positions include 14-16 and Thr61; that span reads SKS. Lys65 (proton acceptor) is an active-site residue. An NADP(+)-binding site is contributed by Glu77. Shikimate-binding residues include Asn86 and Asp102. NADP(+) contacts are provided by residues 126-130, 149-154, and Met213; these read GAGGA and NRTVSR. Tyr215 serves as a coordination point for shikimate. NADP(+) is bound at residue Gly237.

Belongs to the shikimate dehydrogenase family. As to quaternary structure, homodimer.

It catalyses the reaction shikimate + NADP(+) = 3-dehydroshikimate + NADPH + H(+). Its pathway is metabolic intermediate biosynthesis; chorismate biosynthesis; chorismate from D-erythrose 4-phosphate and phosphoenolpyruvate: step 4/7. Involved in the biosynthesis of the chorismate, which leads to the biosynthesis of aromatic amino acids. Catalyzes the reversible NADPH linked reduction of 3-dehydroshikimate (DHSA) to yield shikimate (SA). This is Shikimate dehydrogenase (NADP(+)) from Shigella flexneri serotype 5b (strain 8401).